Reading from the N-terminus, the 363-residue chain is 3-dehydroquinate synthase (363 aa).

NAD(+)-binding positions include 134–135, Lys-147, and Lys-156; that span reads TT. Residues Glu-189, His-254, and His-271 each coordinate Zn(2+).

Belongs to the sugar phosphate cyclases superfamily. Dehydroquinate synthase family. Co(2+) serves as cofactor. The cofactor is Zn(2+). It depends on NAD(+) as a cofactor.

The protein localises to the cytoplasm. The enzyme catalyses 7-phospho-2-dehydro-3-deoxy-D-arabino-heptonate = 3-dehydroquinate + phosphate. The protein operates within metabolic intermediate biosynthesis; chorismate biosynthesis; chorismate from D-erythrose 4-phosphate and phosphoenolpyruvate: step 2/7. In terms of biological role, catalyzes the conversion of 3-deoxy-D-arabino-heptulosonate 7-phosphate (DAHP) to dehydroquinate (DHQ). This chain is 3-dehydroquinate synthase, found in Prochlorococcus marinus (strain MIT 9312).